Consider the following 293-residue polypeptide: 33 kDa chaperonin (293 aa).

Cystine bridges form between Cys-231–Cys-233 and Cys-264–Cys-267.

It belongs to the HSP33 family. Under oxidizing conditions two disulfide bonds are formed involving the reactive cysteines. Under reducing conditions zinc is bound to the reactive cysteines and the protein is inactive.

It localises to the cytoplasm. Functionally, redox regulated molecular chaperone. Protects both thermally unfolding and oxidatively damaged proteins from irreversible aggregation. Plays an important role in the bacterial defense system toward oxidative stress. This is 33 kDa chaperonin from Yersinia pseudotuberculosis serotype O:1b (strain IP 31758).